A 251-amino-acid chain; its full sequence is Probable transcriptional regulatory protein Cpar_0525 (251 aa).

The protein belongs to the TACO1 family.

Its subcellular location is the cytoplasm. The polypeptide is Probable transcriptional regulatory protein Cpar_0525 (Chlorobaculum parvum (strain DSM 263 / NCIMB 8327) (Chlorobium vibrioforme subsp. thiosulfatophilum)).